The chain runs to 130 residues: Histone H2A type 1-C (130 aa).

A disordered region spans residues 1 to 22 (MSGRGKQGGKARAKAKSRSSRA). Ser2 carries the post-translational modification N-acetylserine. Residue Ser2 is modified to Phosphoserine; by RPS6KA5. At Arg4 the chain carries Citrulline; alternate. Arg4 carries the symmetric dimethylarginine; by PRMT5; alternate modification. N6-(2-hydroxyisobutyryl)lysine; alternate is present on residues Lys6 and Lys10. Lys6 carries the post-translational modification N6-acetyllysine; alternate. The span at 7–19 (QGGKARAKAKSRS) shows a compositional bias: basic residues. An N6-(beta-hydroxybutyryl)lysine; alternate mark is found at Lys10 and Lys14. Lys10 bears the N6-lactoyllysine; alternate mark. N6-succinyllysine; alternate is present on Lys10. Lys14 is covalently cross-linked (Glycyl lysine isopeptide (Lys-Gly) (interchain with G-Cter in ubiquitin); alternate). Residue Lys16 forms a Glycyl lysine isopeptide (Lys-Gly) (interchain with G-Cter in ubiquitin) linkage. An N6-(2-hydroxyisobutyryl)lysine; alternate modification is found at Lys37. Lys37 carries the post-translational modification N6-(beta-hydroxybutyryl)lysine; alternate. Lys37 is subject to N6-crotonyllysine; alternate. Residues Lys75 and Lys76 each carry the N6-(2-hydroxyisobutyryl)lysine modification. An N6-(2-hydroxyisobutyryl)lysine; alternate modification is found at Lys96. The residue at position 96 (Lys96) is an N6-(beta-hydroxybutyryl)lysine; alternate. Lys96 carries the N6-succinyllysine; alternate modification. Lys96 carries the N6-glutaryllysine; alternate modification. At Gln105 the chain carries N5-methylglutamine. N6-(2-hydroxyisobutyryl)lysine; alternate is present on Lys119. Lys119 is subject to N6-(beta-hydroxybutyryl)lysine; alternate. Lys119 and Lys120 each carry N6-crotonyllysine; alternate. N6-glutaryllysine; alternate occurs at positions 119 and 120. A Glycyl lysine isopeptide (Lys-Gly) (interchain with G-Cter in ubiquitin); alternate cross-link involves residue Lys120. Thr121 carries the post-translational modification Phosphothreonine; by DCAF1. Lys126 carries the post-translational modification N6-crotonyllysine; alternate. Lys126 is modified (N6-glutaryllysine; alternate).

This sequence belongs to the histone H2A family. As to quaternary structure, the nucleosome is a histone octamer containing two molecules each of H2A, H2B, H3 and H4 assembled in one H3-H4 heterotetramer and two H2A-H2B heterodimers. The octamer wraps approximately 147 bp of DNA. Deiminated on Arg-4 in granulocytes upon calcium entry. Post-translationally, monoubiquitination of Lys-120 (H2AK119Ub) by RING1, TRIM37 and RNF2/RING2 complex gives a specific tag for epigenetic transcriptional repression and participates in X chromosome inactivation of female mammals. It is involved in the initiation of both imprinted and random X inactivation. Ubiquitinated H2A is enriched in inactive X chromosome chromatin. Ubiquitination of H2A functions downstream of methylation of 'Lys-27' of histone H3 (H3K27me). H2AK119Ub by RNF2/RING2 can also be induced by ultraviolet and may be involved in DNA repair. Monoubiquitination of Lys-120 (H2AK119Ub) by TRIM37 may promote transformation of cells in a number of breast cancers. Following DNA double-strand breaks (DSBs), it is ubiquitinated through 'Lys-63' linkage of ubiquitin moieties by the E2 ligase UBE2N and the E3 ligases RNF8 and RNF168, leading to the recruitment of repair proteins to sites of DNA damage. Ubiquitination at Lys-14 and Lys-16 (H2AK13Ub and H2AK15Ub, respectively) in response to DNA damage is initiated by RNF168 that mediates monoubiquitination at these 2 sites, and 'Lys-63'-linked ubiquitin are then conjugated to monoubiquitin; RNF8 is able to extend 'Lys-63'-linked ubiquitin chains in vitro. Deubiquitinated by USP51 at Lys-14 and Lys-16 (H2AK13Ub and H2AK15Ub, respectively) after damaged DNA is repaired. H2AK119Ub and ionizing radiation-induced 'Lys-63'-linked ubiquitination (H2AK13Ub and H2AK15Ub) are distinct events. In terms of processing, phosphorylation on Ser-2 (H2AS1ph) is enhanced during mitosis. Phosphorylation on Ser-2 by RPS6KA5/MSK1 directly represses transcription. Acetylation of H3 inhibits Ser-2 phosphorylation by RPS6KA5/MSK1. Phosphorylation at Thr-121 (H2AT120ph) by DCAF1 is present in the regulatory region of many tumor suppresor genes and down-regulates their transcription. Glutamine methylation at Gln-105 (H2AQ104me) by FBL is specifically dedicated to polymerase I. It is present at 35S ribosomal DNA locus and impairs binding of the FACT complex. Post-translationally, symmetric dimethylation on Arg-4 by the PRDM1/PRMT5 complex may play a crucial role in the germ-cell lineage. In terms of processing, crotonylation (Kcr) is specifically present in male germ cells and marks testis-specific genes in post-meiotic cells, including X-linked genes that escape sex chromosome inactivation in haploid cells. Crotonylation marks active promoters and enhancers and confers resistance to transcriptional repressors. It is also associated with post-meiotically activated genes on autosomes. Lactylated in macrophages by EP300/P300 by using lactoyl-CoA directly derived from endogenous or exogenous lactate, leading to stimulates gene transcription.

The protein localises to the nucleus. Its subcellular location is the chromosome. Its function is as follows. Core component of nucleosome. Nucleosomes wrap and compact DNA into chromatin, limiting DNA accessibility to the cellular machineries which require DNA as a template. Histones thereby play a central role in transcription regulation, DNA repair, DNA replication and chromosomal stability. DNA accessibility is regulated via a complex set of post-translational modifications of histones, also called histone code, and nucleosome remodeling. This Homo sapiens (Human) protein is Histone H2A type 1-C.